The chain runs to 187 residues: MSSSLPQHYRDILLELGENPEREGLLDTPKRASKAMQYLCHGYTQTVEEIVNGALFASDNDEMVIVQNIELYSLCEHHLLPFIGKAHVAYIPTGKVLGLSKIARIVDMFARRLQIQENLTKQIADSIQQVTGAAGVAVVIEAQHMCMMMRGVEKQNSTMNTSVMLGAFRESSTTRMEFLQLIGRSRT.

This sequence belongs to the GTP cyclohydrolase I family. As to quaternary structure, homomer.

It catalyses the reaction GTP + H2O = 7,8-dihydroneopterin 3'-triphosphate + formate + H(+). It participates in cofactor biosynthesis; 7,8-dihydroneopterin triphosphate biosynthesis; 7,8-dihydroneopterin triphosphate from GTP: step 1/1. In Pseudomonas syringae pv. tomato (strain ATCC BAA-871 / DC3000), this protein is GTP cyclohydrolase 1 1.